Here is a 356-residue protein sequence, read N- to C-terminus: Uroporphyrinogen decarboxylase (356 aa).

Arginine 33, alanine 35, arginine 37, arginine 46, aspartate 82, tyrosine 159, serine 214, and histidine 334 together coordinate coproporphyrinogen I. Residues arginine 33, alanine 35, and arginine 37 each contribute to the coproporphyrinogen III site. Coproporphyrinogen III-binding residues include aspartate 82, tyrosine 159, serine 214, and histidine 334.

This sequence belongs to the uroporphyrinogen decarboxylase family. As to quaternary structure, homodimer.

It localises to the cytoplasm. Its subcellular location is the cytosol. The enzyme catalyses uroporphyrinogen III + 4 H(+) = coproporphyrinogen III + 4 CO2. Its pathway is porphyrin-containing compound metabolism; protoporphyrin-IX biosynthesis; coproporphyrinogen-III from 5-aminolevulinate: step 4/4. Catalyzes the decarboxylation of four acetate groups of uroporphyrinogen-III to yield coproporphyrinogen-III. This Drosophila melanogaster (Fruit fly) protein is Uroporphyrinogen decarboxylase.